The following is a 31-amino-acid chain: Photosystem II reaction center protein T (31 aa).

M1 carries the N-formylmethionine modification. A helical membrane pass occupies residues 3-23 (SVAYILVLTMALAVLFFAIAF).

Belongs to the PsbT family. In terms of assembly, PSII is composed of 1 copy each of membrane proteins PsbA, PsbB, PsbC, PsbD, PsbE, PsbF, PsbH, PsbI, PsbJ, PsbK, PsbL, PsbM, PsbT, PsbX, PsbY, PsbZ, Psb30/Ycf12, peripheral proteins PsbO, CyanoQ (PsbQ), PsbU, PsbV and a large number of cofactors. It forms dimeric complexes.

Its subcellular location is the cellular thylakoid membrane. Found at the monomer-monomer interface of the photosystem II (PS II) dimer, plays a role in assembly and dimerization of PSII. PSII is a light-driven water plastoquinone oxidoreductase, using light energy to abstract electrons from H(2)O, generating a proton gradient subsequently used for ATP formation. The sequence is that of Photosystem II reaction center protein T from Synechocystis sp. (strain ATCC 27184 / PCC 6803 / Kazusa).